The primary structure comprises 253 residues: MDVEVKKNKNEPYLKDHEVKDLIKRSQQGDQIARDTIVQKNMRLVWSVVQRFINRGYEPDDLFQIGCIGLLKSVDKFDLSYDVKFSTYAVPMIIGEIQRFIRDDGTVKVSRSLKEMSNKIRKAKDELSKLLGRVPTVAEVAEHLDLTPEEVVLAQEANRAPSSIHETVYENDGDPITLLDQIADHTEAKWFDKIALKEAIEELDEREKLIVYLRYYKDQTQSEVAARLGISQVQVSRLEKKILKQMKLHMNDT.

Residues aspartate 61 to valine 74 carry the Polymerase core binding motif. The segment at residues glutamine 221 to lysine 240 is a DNA-binding region (H-T-H motif).

Belongs to the sigma-70 factor family.

In terms of biological role, sigma factors are initiation factors that promote the attachment of RNA polymerase to specific initiation sites and are then released. This sigma factor is responsible for the expression of sporulation specific genes. It is responsible for directing gene expression in the forespore compartment of developing cells of Bacillus. The protein is RNA polymerase sigma-F factor (sigF) of Priestia megaterium (Bacillus megaterium).